The sequence spans 178 residues: Ribosome maturation factor RimP (178 aa).

This sequence belongs to the RimP family.

It is found in the cytoplasm. Functionally, required for maturation of 30S ribosomal subunits. The sequence is that of Ribosome maturation factor RimP from Caulobacter vibrioides (strain ATCC 19089 / CIP 103742 / CB 15) (Caulobacter crescentus).